The following is a 321-amino-acid chain: NADH-ubiquinone oxidoreductase chain 1 (321 aa).

Helical transmembrane passes span 6 to 26 (IVPP…LTAL), 67 to 87 (LLAT…LALA), 103 to 123 (LGLL…LWSG), 143 to 163 (ISYE…SGGF), 174 to 194 (PLYL…STLA), 220 to 240 (ASPF…MNTL), 256 to 276 (ALFT…FLWV), and 296 to 316 (FLPM…SMFG).

The protein belongs to the complex I subunit 1 family.

Its subcellular location is the mitochondrion inner membrane. The enzyme catalyses a ubiquinone + NADH + 5 H(+)(in) = a ubiquinol + NAD(+) + 4 H(+)(out). Functionally, core subunit of the mitochondrial membrane respiratory chain NADH dehydrogenase (Complex I) that is believed to belong to the minimal assembly required for catalysis. Complex I functions in the transfer of electrons from NADH to the respiratory chain. The immediate electron acceptor for the enzyme is believed to be ubiquinone. The protein is NADH-ubiquinone oxidoreductase chain 1 (MT-ND1) of Alligator mississippiensis (American alligator).